Here is a 246-residue protein sequence, read N- to C-terminus: 1-(5-phosphoribosyl)-5-[(5-phosphoribosylamino)methylideneamino] imidazole-4-carboxamide isomerase (246 aa).

D10 (proton acceptor) is an active-site residue. D131 (proton donor) is an active-site residue.

This sequence belongs to the HisA/HisF family.

The protein resides in the cytoplasm. It catalyses the reaction 1-(5-phospho-beta-D-ribosyl)-5-[(5-phospho-beta-D-ribosylamino)methylideneamino]imidazole-4-carboxamide = 5-[(5-phospho-1-deoxy-D-ribulos-1-ylimino)methylamino]-1-(5-phospho-beta-D-ribosyl)imidazole-4-carboxamide. It functions in the pathway amino-acid biosynthesis; L-histidine biosynthesis; L-histidine from 5-phospho-alpha-D-ribose 1-diphosphate: step 4/9. The sequence is that of 1-(5-phosphoribosyl)-5-[(5-phosphoribosylamino)methylideneamino] imidazole-4-carboxamide isomerase from Acidiphilium cryptum (strain JF-5).